Here is a 265-residue protein sequence, read N- to C-terminus: Chlorophyll a-b binding protein 1A, chloroplastic (265 aa).

The transit peptide at 1 to 34 (MAAAAMALSSPSFAGQAVKLSPSASENSGNGRIT) directs the protein to the chloroplast. Residues 151–171 (LVHAQSILAIWACQVVLMGAV) traverse the membrane as a helical segment. The chlorophyll b site is built by Val152, Ser156, Gln164, Glu172, Arg175, and Leu181. Residues Lys212, Glu213, Asn216, Arg218, Gln230, His245, and Ala254 each coordinate chlorophyll a. A helical transmembrane segment spans residues 219–239 (LAMFSMFGFFVQAIVTGKGPL). Phe261 lines the chlorophyll b pocket.

The protein belongs to the light-harvesting chlorophyll a/b-binding (LHC) protein family. The LHC complex consists of chlorophyll a-b binding proteins. It depends on Binds at least 14 chlorophylls (8 Chl-a and 6 Chl-b) and carotenoids such as lutein and neoxanthin. as a cofactor. Post-translationally, photoregulated by reversible phosphorylation of its threonine residues.

It is found in the plastid. It localises to the chloroplast thylakoid membrane. In terms of biological role, the light-harvesting complex (LHC) functions as a light receptor, it captures and delivers excitation energy to photosystems with which it is closely associated. This chain is Chlorophyll a-b binding protein 1A, chloroplastic (CAB1A), found in Solanum lycopersicum (Tomato).